Consider the following 268-residue polypeptide: Non-homologous end joining protein Ku (268 aa).

One can recognise a Ku domain in the interval 13–175 (VSLVTCPVTM…TLHDGNAVRN (163 aa)). Positions 174–194 (RNGGHPAARTRPASEAESADS) are disordered.

Belongs to the prokaryotic Ku family. Homodimer. Interacts with LigD.

With LigD forms a non-homologous end joining (NHEJ) DNA repair enzyme, which repairs dsDNA breaks with reduced fidelity. Binds linear dsDNA with 5'- and 3'- overhangs but not closed circular dsDNA nor ssDNA. Recruits and stimulates the ligase activity of LigD. The protein is Non-homologous end joining protein Ku of Gluconacetobacter diazotrophicus (strain ATCC 49037 / DSM 5601 / CCUG 37298 / CIP 103539 / LMG 7603 / PAl5).